A 412-amino-acid chain; its full sequence is UPF0754 membrane protein syc0451_d (412 aa).

The next 2 membrane-spanning stretches (helical) occupy residues 8–28 and 390–410; these read LWLLPPVVGGIIGYFTNDLAI and IGGVLGVLLGCVQSLINVWSL.

The protein belongs to the UPF0754 family.

The protein resides in the cell inner membrane. This chain is UPF0754 membrane protein syc0451_d, found in Synechococcus sp. (strain ATCC 27144 / PCC 6301 / SAUG 1402/1) (Anacystis nidulans).